The following is a 464-amino-acid chain: Elongation factor 1-alpha (464 aa).

The region spanning 5-242 is the tr-type G domain; sequence KTHINIVVIG…DSVVPPQRPT (238 aa). GTP-binding positions include 14-21, 91-95, and 153-156; these read GHVDSGKS, DAPGH, and NKMD. 5-glutamyl glycerylphosphorylethanolamine is present on residues Glu-301 and Glu-374.

Belongs to the TRAFAC class translation factor GTPase superfamily. Classic translation factor GTPase family. EF-Tu/EF-1A subfamily.

It is found in the cytoplasm. Functionally, this protein promotes the GTP-dependent binding of aminoacyl-tRNA to the A-site of ribosomes during protein biosynthesis. In Onchocerca volvulus, this protein is Elongation factor 1-alpha.